A 116-amino-acid polypeptide reads, in one-letter code: uncharacterized protein (116 aa).

Residues 64–116 form a disordered region; sequence RRFYSGTVNRNARSAGAASRSTSSVKRPLESKKRNARPETEKWCASYSAGNRR. Residues 73 to 87 are compositionally biased toward low complexity; it reads RNARSAGAASRSTSS. Residues 90-105 are compositionally biased toward basic and acidic residues; the sequence is RPLESKKRNARPETEK.

This is an uncharacterized protein from Saccharomyces cerevisiae (strain ATCC 204508 / S288c) (Baker's yeast).